A 372-amino-acid polypeptide reads, in one-letter code: Cobalt-precorrin-5B C(1)-methyltransferase (372 aa).

It belongs to the CbiD family.

It catalyses the reaction Co-precorrin-5B + S-adenosyl-L-methionine = Co-precorrin-6A + S-adenosyl-L-homocysteine. It participates in cofactor biosynthesis; adenosylcobalamin biosynthesis; cob(II)yrinate a,c-diamide from sirohydrochlorin (anaerobic route): step 6/10. Its function is as follows. Catalyzes the methylation of C-1 in cobalt-precorrin-5B to form cobalt-precorrin-6A. The sequence is that of Cobalt-precorrin-5B C(1)-methyltransferase from Geobacillus thermodenitrificans (strain NG80-2).